Reading from the N-terminus, the 458-residue chain is UDP-N-acetylmuramoylalanine--D-glutamate ligase (458 aa).

124–130 is a binding site for ATP; sequence GSDGKTT.

It belongs to the MurCDEF family.

The protein resides in the cytoplasm. The catalysed reaction is UDP-N-acetyl-alpha-D-muramoyl-L-alanine + D-glutamate + ATP = UDP-N-acetyl-alpha-D-muramoyl-L-alanyl-D-glutamate + ADP + phosphate + H(+). Its pathway is cell wall biogenesis; peptidoglycan biosynthesis. In terms of biological role, cell wall formation. Catalyzes the addition of glutamate to the nucleotide precursor UDP-N-acetylmuramoyl-L-alanine (UMA). The sequence is that of UDP-N-acetylmuramoylalanine--D-glutamate ligase from Clostridium botulinum (strain Okra / Type B1).